A 227-amino-acid chain; its full sequence is Cytidylate kinase (227 aa).

Residue 12–20 (GPSGAGKGT) coordinates ATP.

It belongs to the cytidylate kinase family. Type 1 subfamily.

Its subcellular location is the cytoplasm. It carries out the reaction CMP + ATP = CDP + ADP. It catalyses the reaction dCMP + ATP = dCDP + ADP. In Salmonella paratyphi A (strain ATCC 9150 / SARB42), this protein is Cytidylate kinase.